The primary structure comprises 83 residues: Large ribosomal subunit protein bL27c (83 aa).

Residues 1–24 (MAHKKGAGSTKNGRDSNAKRLGVK) are disordered.

This sequence belongs to the bacterial ribosomal protein bL27 family.

The protein localises to the plastid. Its subcellular location is the chloroplast. This is Large ribosomal subunit protein bL27c (rpl27) from Trieres chinensis (Marine centric diatom).